We begin with the raw amino-acid sequence, 436 residues long: T-box transcription factor TBX6 (436 aa).

The T-box DNA-binding region spans 100-273 (LWKEFSSVGT…ANPFAKGFRE (174 aa)). Residues 271–284 (FRENGRNCKRERDA) show a composition bias toward basic and acidic residues. Disordered regions lie at residues 271–339 (FREN…APAP) and 360–379 (PSHLPTRSPSFPEAPDSGRS). Residues 325–339 (EQAPAPGEATAAPAP) are compositionally biased toward low complexity.

Forms a dimeric complex with DNA (in vitro). As to expression, expressed in fetal tail bud, posterior spinal tissue, intervertebral disk and testis. Also expressed in adult testis, kidney, lung, muscle and thymus.

It localises to the nucleus. Functionally, T-box transcription factor that plays an essential role in the determination of the fate of axial stem cells: neural vs mesodermal. Acts in part by down-regulating, a specific enhancer (N1) of SOX2, to inhibit neural development. Seems to play also an essential role in left/right axis determination and acts through effects on Notch signaling around the node as well as through an effect on the morphology and motility of the nodal cilia. The sequence is that of T-box transcription factor TBX6 (TBX6) from Homo sapiens (Human).